The following is a 520-amino-acid chain: UDP-N-acetylmuramoyl-L-alanyl-D-glutamate--2,6-diaminopimelate ligase (520 aa).

UDP-N-acetyl-alpha-D-muramoyl-L-alanyl-D-glutamate is bound at residue Leu-48. 134-140 is a binding site for ATP; sequence GTSGKTT. UDP-N-acetyl-alpha-D-muramoyl-L-alanyl-D-glutamate-binding positions include 176–177, Ser-203, and Arg-211; that span reads TT. An N6-carboxylysine modification is found at Lys-243. Residues Arg-405, 429–432, Gly-483, and Glu-487 each bind meso-2,6-diaminopimelate; that span reads DNPR. Positions 429 to 432 match the Meso-diaminopimelate recognition motif motif; sequence DNPR.

It belongs to the MurCDEF family. MurE subfamily. Mg(2+) serves as cofactor. In terms of processing, carboxylation is probably crucial for Mg(2+) binding and, consequently, for the gamma-phosphate positioning of ATP.

It is found in the cytoplasm. It carries out the reaction UDP-N-acetyl-alpha-D-muramoyl-L-alanyl-D-glutamate + meso-2,6-diaminopimelate + ATP = UDP-N-acetyl-alpha-D-muramoyl-L-alanyl-gamma-D-glutamyl-meso-2,6-diaminopimelate + ADP + phosphate + H(+). The protein operates within cell wall biogenesis; peptidoglycan biosynthesis. In terms of biological role, catalyzes the addition of meso-diaminopimelic acid to the nucleotide precursor UDP-N-acetylmuramoyl-L-alanyl-D-glutamate (UMAG) in the biosynthesis of bacterial cell-wall peptidoglycan. The polypeptide is UDP-N-acetylmuramoyl-L-alanyl-D-glutamate--2,6-diaminopimelate ligase (Mycobacterium avium (strain 104)).